The primary structure comprises 303 residues: mRNA-capping enzyme subunit beta (303 aa).

The protein belongs to the fungal TPase family. Heterodimer. The mRNA-capping enzyme is composed of two separate chains alpha and beta, respectively a mRNA guanylyltransferase and an mRNA 5'-triphosphate monophosphatase. It depends on Mg(2+) as a cofactor.

It is found in the nucleus. It carries out the reaction a 5'-end triphospho-ribonucleoside in mRNA + H2O = a 5'-end diphospho-ribonucleoside in mRNA + phosphate + H(+). In terms of biological role, first step of mRNA capping. Converts the 5'-triphosphate end of a nascent mRNA chain into a diphosphate end. The chain is mRNA-capping enzyme subunit beta (pct1) from Schizosaccharomyces pombe (strain 972 / ATCC 24843) (Fission yeast).